We begin with the raw amino-acid sequence, 209 residues long: Endonuclease III (209 aa).

The region spanning 108-127 (RTELESLPGVGRKTANIILN) is the HhH domain. [4Fe-4S] cluster is bound by residues Cys187, Cys194, Cys197, and Cys203.

The protein belongs to the Nth/MutY family. [4Fe-4S] cluster serves as cofactor.

It carries out the reaction 2'-deoxyribonucleotide-(2'-deoxyribose 5'-phosphate)-2'-deoxyribonucleotide-DNA = a 3'-end 2'-deoxyribonucleotide-(2,3-dehydro-2,3-deoxyribose 5'-phosphate)-DNA + a 5'-end 5'-phospho-2'-deoxyribonucleoside-DNA + H(+). Its function is as follows. DNA repair enzyme that has both DNA N-glycosylase activity and AP-lyase activity. The DNA N-glycosylase activity releases various damaged pyrimidines from DNA by cleaving the N-glycosidic bond, leaving an AP (apurinic/apyrimidinic) site. The AP-lyase activity cleaves the phosphodiester bond 3' to the AP site by a beta-elimination, leaving a 3'-terminal unsaturated sugar and a product with a terminal 5'-phosphate. This Buchnera aphidicola subsp. Schizaphis graminum (strain Sg) protein is Endonuclease III.